A 219-amino-acid chain; its full sequence is Vacuolar protein sorting-associated protein 20 homolog 1 (219 aa).

The stretch at 20-60 forms a coiled coil; sequence SLKTQRRKLGQYQQKLEKVIEAEKQAARDLIREKRKDRALL. The interval 171–219 is disordered; sequence PEVPTKESEESEKLDLPDVPTKTPVASNAEITPAESATKTKVLEEPLPA. A compositionally biased stretch (basic and acidic residues) spans 174–186; the sequence is PTKESEESEKLDL. Polar residues predominate over residues 194 to 209; the sequence is PVASNAEITPAESATK.

The protein belongs to the SNF7 family. As to quaternary structure, component of the endosomal sorting required for transport complex III (ESCRT-III), composed at least of VPS2, VPS20, VPS24 and VPS32. Interacts with SKD1.

Its subcellular location is the endosome. Its function is as follows. Component of the ESCRT-III complex, which is required for multivesicular bodies (MVBs) formation and sorting of endosomal cargo proteins into MVBs. The ESCRT-III complex is probably involved in the concentration of MVB cargo. The sequence is that of Vacuolar protein sorting-associated protein 20 homolog 1 (VPS20.1) from Arabidopsis thaliana (Mouse-ear cress).